The following is a 926-amino-acid chain: Serine/threonine-protein kinase pakE (926 aa).

Positions 36 to 55 are enriched in polar residues; the sequence is SSRELPTQDSSTKTSNITTP. 2 disordered regions span residues 36–257 and 546–576; these read SSRE…RPKL and QLNN…TTTT. The segment covering 56 to 107 has biased composition (low complexity); it reads NNNNNNNNNNNNNNNNNNNNNNNNNNNNNNNNNNNNNNNNNNNNNNNNNNNN. The span at 108 to 117 shows a compositional bias: polar residues; the sequence is TPTSLNSSWK. Positions 134-173 are enriched in low complexity; the sequence is NNNNNVGSPNNQSTSQTNHQQPPPQQLQQQQSLSSTSTPS. Over residues 183 to 204 the composition is skewed to polar residues; that stretch reads RRNVTSPNLTRSDPTVPITNSR. Positions 215 to 253 are enriched in low complexity; sequence PQFQLNNLNFDDNNDHSTTTTNNNNNNNNNNSNNNNNNN. Positions 534–567 form a coiled coil; the sequence is LDFEKELKENQQQLNNNNNNNNNNNNNNNNNNNN. The Protein kinase domain occupies 650–903; that stretch reads FEFKEKLGQG…VIDLLSHDFI (254 aa). Residues 656 to 664 and Lys-679 each bind ATP; that span reads LGQGGYGAV. Asp-771 serves as the catalytic Proton acceptor.

The protein belongs to the protein kinase superfamily. STE Ser/Thr protein kinase family. STE20 subfamily. The cofactor is Mg(2+).

The enzyme catalyses L-seryl-[protein] + ATP = O-phospho-L-seryl-[protein] + ADP + H(+). It catalyses the reaction L-threonyl-[protein] + ATP = O-phospho-L-threonyl-[protein] + ADP + H(+). Its function is as follows. May play a role in responding to changes in chemoattractant levels. The sequence is that of Serine/threonine-protein kinase pakE from Dictyostelium discoideum (Social amoeba).